We begin with the raw amino-acid sequence, 456 residues long: Serine/threonine-protein kinase meng-po (456 aa).

The interval 15–78 (RSFGDGGSTN…RSSIYKKPDK (64 aa)) is disordered. A compositionally biased stretch (low complexity) spans 22–55 (STNSRNSNNNSSTCTNHNNQKRCSTPLTPTSTST). A Protein kinase domain is found at 101 to 367 (YNIEKTLAEG…VAKYMKDRWV (267 aa)). ATP contacts are provided by residues 107 to 115 (LAEGCFAKI) and Lys-130. Asp-221 (proton acceptor) is an active-site residue. Ser-334 carries the phosphoserine; by PKA modification.

The protein belongs to the protein kinase superfamily. Ser/Thr protein kinase family. It depends on Mg(2+) as a cofactor. Expressed in the mushroom bodies (at protein level).

It catalyses the reaction L-seryl-[protein] + ATP = O-phospho-L-seryl-[protein] + ADP + H(+). The enzyme catalyses L-threonyl-[protein] + ATP = O-phospho-L-threonyl-[protein] + ADP + H(+). Activated by Pka-C1-mediated phosphorylation of Ser-334. Its function is as follows. Serine/threonine-protein kinase involved in memory formation. Together with the cAMP-dependent protein kinase A Pka-C1, promotes long-term memory (LTM) by regulating CrebB stability and activity. Involved in the maintenance of anesthesia-sensitive memory (ASM) which includes short-term memory (STM) and middle-term memory (MTM). In Drosophila melanogaster (Fruit fly), this protein is Serine/threonine-protein kinase meng-po.